The following is a 1092-amino-acid chain: Isoleucine--tRNA ligase (1092 aa).

The 'HIGH' region motif lies at 53–63; it reads PFANGLPHYGH. A 'KMSKS' region motif is present at residues 613 to 617; it reads KLSKR. Lys-616 is a binding site for ATP.

This sequence belongs to the class-I aminoacyl-tRNA synthetase family. IleS type 2 subfamily. In terms of assembly, monomer. Requires Zn(2+) as cofactor.

Its subcellular location is the cytoplasm. It carries out the reaction tRNA(Ile) + L-isoleucine + ATP = L-isoleucyl-tRNA(Ile) + AMP + diphosphate. Its function is as follows. Catalyzes the attachment of isoleucine to tRNA(Ile). As IleRS can inadvertently accommodate and process structurally similar amino acids such as valine, to avoid such errors it has two additional distinct tRNA(Ile)-dependent editing activities. One activity is designated as 'pretransfer' editing and involves the hydrolysis of activated Val-AMP. The other activity is designated 'posttransfer' editing and involves deacylation of mischarged Val-tRNA(Ile). The sequence is that of Isoleucine--tRNA ligase from Rickettsia peacockii (strain Rustic).